Here is a 453-residue protein sequence, read N- to C-terminus: Ribulose bisphosphate carboxylase large chain (453 aa).

Residues 1 to 2 constitute a propeptide that is removed on maturation; sequence MS. Position 3 is an N-acetylproline (Pro-3). At Lys-14 the chain carries N6,N6,N6-trimethyllysine. Substrate is bound by residues Asn-123 and Thr-173. The active-site Proton acceptor is Lys-175. Lys-177 is a substrate binding site. Positions 201, 203, and 204 each coordinate Mg(2+). Lys-201 is subject to N6-carboxylysine. The active-site Proton acceptor is His-294. Residues Arg-295, His-327, and Ser-379 each contribute to the substrate site.

This sequence belongs to the RuBisCO large chain family. Type I subfamily. As to quaternary structure, heterohexadecamer of 8 large chains and 8 small chains; disulfide-linked. The disulfide link is formed within the large subunit homodimers. Mg(2+) is required as a cofactor. The disulfide bond which can form in the large chain dimeric partners within the hexadecamer appears to be associated with oxidative stress and protein turnover.

The protein resides in the plastid. It localises to the chloroplast. It carries out the reaction 2 (2R)-3-phosphoglycerate + 2 H(+) = D-ribulose 1,5-bisphosphate + CO2 + H2O. It catalyses the reaction D-ribulose 1,5-bisphosphate + O2 = 2-phosphoglycolate + (2R)-3-phosphoglycerate + 2 H(+). RuBisCO catalyzes two reactions: the carboxylation of D-ribulose 1,5-bisphosphate, the primary event in carbon dioxide fixation, as well as the oxidative fragmentation of the pentose substrate in the photorespiration process. Both reactions occur simultaneously and in competition at the same active site. This chain is Ribulose bisphosphate carboxylase large chain, found in Asperula laevigata (Smooth woodruff).